The following is a 949-amino-acid chain: MAM domain-containing glycosylphosphatidylinositol anchor protein 2 (949 aa).

An N-terminal signal peptide occupies residues 1–25; that stretch reads MDLVYGLVWLLTVLLEGISGQGVYA. Ig-like domains follow at residues 27-127 and 134-232; these read PTVR…IRVD and PVVT…KMVS. 2 cysteine pairs are disulfide-bonded: C62-C110 and C159-C216. Residues N92, N213, and N237 are each glycosylated (N-linked (GlcNAc...) asparagine). Ig-like domains follow at residues 242 to 328, 340 to 436, 442 to 533, and 540 to 627; these read PSIK…NIIV, PDPY…VNIS, PNLT…ALVQ, and PAVE…FLVT. 2 disulfide bridges follow: C264/C310 and C359/C417. N434, N443, N504, N610, and N703 each carry an N-linked (GlcNAc...) asparagine glycan. 2 disulfides stabilise this stretch: C465-C515 and C561-C611. Residues 638–738 form the Fibronectin type-III domain; sequence DTYNPVWQNR…TIRVIKYTGE (101 aa). The MAM domain maps to 739-914; it reads FHCGFEDGNI…VSIAEGECAK (176 aa). D924 is lipidated: GPI-anchor amidated aspartate. Residues 925-949 constitute a propeptide, removed in mature form; it reads GAVGILVHIWLFPVIILISILSPRR.

As to quaternary structure, interacts (through the Ig-like domains) with NLGN2. In terms of tissue distribution, expressed predominantly in neuronal tissue. Expressed in brain.

It localises to the cell membrane. Functionally, may be involved in cell-cell interactions. This is MAM domain-containing glycosylphosphatidylinositol anchor protein 2 (Mdga2) from Rattus norvegicus (Rat).